Here is a 168-residue protein sequence, read N- to C-terminus: ATP synthase F(1) complex subunit delta, mitochondrial (168 aa).

A mitochondrion-targeting transit peptide spans 1 to 22 (MLPAALLRRPGLGRLVRHARAY). 2 positions are modified to N6-acetyllysine; alternate: Lys-136 and Lys-165. N6-succinyllysine; alternate occurs at positions 136 and 165.

Belongs to the ATPase epsilon chain family. As to quaternary structure, component of the ATP synthase complex composed at least of ATP5F1A/subunit alpha, ATP5F1B/subunit beta, ATP5MC1/subunit c (homooctomer), MT-ATP6/subunit a, MT-ATP8/subunit 8, ATP5ME/subunit e, ATP5MF/subunit f, ATP5MG/subunit g, ATP5MK/subunit k, ATP5MJ/subunit j, ATP5F1C/subunit gamma, ATP5F1D/subunit delta, ATP5F1E/subunit epsilon, ATP5PF/subunit F6, ATP5PB/subunit b, ATP5PD/subunit d, ATP5PO/subunit OSCP. ATP synthase complex consists of a soluble F(1) head domain (subunits alpha(3) and beta(3)) - the catalytic core - and a membrane F(0) domain - the membrane proton channel (subunits c, a, 8, e, f, g, k and j). These two domains are linked by a central stalk (subunits gamma, delta, and epsilon) rotating inside the F1 region and a stationary peripheral stalk (subunits F6, b, d, and OSCP). Component of a complex composed at least by ATPIF1, ATP5F1A, ATP5F1B, ATP5F1C AND ATP5F1E.

It is found in the mitochondrion. The protein localises to the mitochondrion inner membrane. Functionally, subunit delta, of the mitochondrial membrane ATP synthase complex (F(1)F(0) ATP synthase or Complex V) that produces ATP from ADP in the presence of a proton gradient across the membrane which is generated by electron transport complexes of the respiratory chain. ATP synthase complex consist of a soluble F(1) head domain - the catalytic core - and a membrane F(1) domain - the membrane proton channel. These two domains are linked by a central stalk rotating inside the F(1) region and a stationary peripheral stalk. During catalysis, ATP synthesis in the catalytic domain of F(1) is coupled via a rotary mechanism of the central stalk subunits to proton translocation. In vivo, can only synthesize ATP although its ATP hydrolase activity can be activated artificially in vitro. With the central stalk subunit gamma, is essential for the biogenesis of F(1) catalytic part of the ATP synthase complex namely in the formation of F1 assembly intermediate. This is ATP synthase F(1) complex subunit delta, mitochondrial from Homo sapiens (Human).